The sequence spans 115 residues: T cell receptor beta variable 18 (115 aa).

A signal peptide spans 1–21 (MDTRLLCCAVICLLGAGLSNA). Positions 22 to 115 (GVMQNPRHLV…SAAYFCASSP (94 aa)) constitute an Ig-like domain. Cys42 and Cys111 form a disulfide bridge.

As to quaternary structure, alpha-beta TR is a heterodimer composed of an alpha and beta chain; disulfide-linked. The alpha-beta TR is associated with the transmembrane signaling CD3 coreceptor proteins to form the TR-CD3 (TcR or TCR). The assembly of alpha-beta TR heterodimers with CD3 occurs in the endoplasmic reticulum where a single alpha-beta TR heterodimer associates with one CD3D-CD3E heterodimer, one CD3G-CD3E heterodimer and one CD247 homodimer forming a stable octameric structure. CD3D-CD3E and CD3G-CD3E heterodimers preferentially associate with TR alpha and TR beta chains, respectively. The association of the CD247 homodimer is the last step of TcR assembly in the endoplasmic reticulum and is required for transport to the cell surface.

It is found in the cell membrane. Its function is as follows. V region of the variable domain of T cell receptor (TR) beta chain that participates in the antigen recognition. Alpha-beta T cell receptors are antigen specific receptors which are essential to the immune response and are present on the cell surface of T lymphocytes. Recognize peptide-major histocompatibility (MH) (pMH) complexes that are displayed by antigen presenting cells (APC), a prerequisite for efficient T cell adaptive immunity against pathogens. Binding of alpha-beta TR to pMH complex initiates TR-CD3 clustering on the cell surface and intracellular activation of LCK that phosphorylates the ITAM motifs of CD3G, CD3D, CD3E and CD247 enabling the recruitment of ZAP70. In turn ZAP70 phosphorylates LAT, which recruits numerous signaling molecules to form the LAT signalosome. The LAT signalosome propagates signal branching to three major signaling pathways, the calcium, the mitogen-activated protein kinase (MAPK) kinase and the nuclear factor NF-kappa-B (NF-kB) pathways, leading to the mobilization of transcription factors that are critical for gene expression and essential for T cell growth and differentiation. The T cell repertoire is generated in the thymus, by V-(D)-J rearrangement. This repertoire is then shaped by intrathymic selection events to generate a peripheral T cell pool of self-MH restricted, non-autoaggressive T cells. Post-thymic interaction of alpha-beta TR with the pMH complexes shapes TR structural and functional avidity. This chain is T cell receptor beta variable 18, found in Homo sapiens (Human).